Reading from the N-terminus, the 562-residue chain is Tetratricopeptide repeat protein 34 (562 aa).

A disordered region spans residues 1–30 (MLHKKPQRANENGISQRKKPSDQDNSSVKE). Residues 19 to 30 (KPSDQDNSSVKE) show a composition bias toward basic and acidic residues. TPR repeat units follow at residues 51–84 (DVSRILCTDALYQLDRIEEAHKMLSLALSNSSQR), 175–208 (KDSLLARARCYGQLGQKKTAIFDFNAILKDEPYN), 210–242 (EALSGKGFMHLTLNQQKEAVHDICLAIKADASY), 304–337 (AHFHILYTDILIAKEKYDEAFNYLRKSFNGNAID), 388–421 (FQAAGQEGNSLIQENQHEKALDYYSLAVISSNNN), 423–455 (KYLRQRAMCLTHLRDYSSAIKDIDKAILRHSSH), 461–494 (AEDYCSKGHILLLSCDEDAATTQYMKAISMEHAS), and 509–542 (AGIFSQVANRYFEQRLFEESWKMSECGLLIDENN).

This is Tetratricopeptide repeat protein 34 (ttc34) from Xenopus laevis (African clawed frog).